The sequence spans 1218 residues: ABC transporter NFT1 (1218 aa).

At 1–29 (MIKNGTCPYWERDDLSECARREYIEFKFP) the chain is on the extracellular side. N-linked (GlcNAc...) asparagine glycosylation is present at N4. A helical membrane pass occupies residues 30 to 50 (LFILLTGMIYAFCKVFRAFYL). The Cytoplasmic segment spans residues 51 to 103 (RGKNHTNEAPEFEEQGNGNHEYARFSVLRLKSAWESRSFCNVNNRSTFDKFKK). The helical transmembrane segment at 104–124 (FIEGAFIVLQLTIHLYILSSM) threads the bilayer. The Extracellular segment spans residues 125-130 (PMDNKK). The helical transmembrane segment at 131–151 (FFHQGFLVQMFLWILLLVVIT) threads the bilayer. Residues 152–169 (LRLISASQSFRWVLACKR) are Cytoplasmic-facing. Residues 170–190 (DLWAVSFYSYASLFTLSILPL) form a helical membrane-spanning segment. At 191–201 (RSVFIGKIKDK) the chain is on the extracellular side. The helical transmembrane segment at 202 to 222 (IMVKYIISETFIDLALLLLLS) threads the bilayer. Residues 223–302 (TSSIEGTRYS…SSKKGRLLPN (80 aa)) are Cytoplasmic-facing. The chain crosses the membrane as a helical span at residues 303-323 (IICYFKAVFISQLFLAFVSSF). An ABC transmembrane type-1 1 domain is found at 311 to 621 (FISQLFLAFV…IASTVSLLIQ (311 aa)). Residues 324–351 (LNFVPSLLMPRILSYVNDPKSKSWNLVS) lie on the Extracellular side of the membrane. A helical transmembrane segment spans residues 352–374 (LYVSSMLVSKIIATTCRGQGLFL). The Cytoplasmic segment spans residues 375 to 449 (GEKGTMQLRT…VMSIDAFKVS (75 aa)). The tract at residues 410–434 (NASTSFEENPDSSEAEPRKKSSRKD) is disordered. A compositionally biased stretch (basic and acidic residues) spans 424-434 (AEPRKKSSRKD). Residues 450–470 (EAMNTFYLACEAVFMTVTALM) traverse the membrane as a helical segment. Residues 471-481 (ILYSLLGWSAF) lie on the Extracellular side of the membrane. A helical transmembrane segment spans residues 482-504 (AGTFALLAMIPLNFWCATFYGNY). Topologically, residues 505 to 558 (QADQLILTDKRTSGISEALNSIRVIKLLAWENLFYQKIINVRDGEIRLLKKKAT) are cytoplasmic. The helical transmembrane segment at 559-579 (IFFLNHLIWFFGPTLVSAITF) threads the bilayer. Topologically, residues 580–584 (SVFIK) are extracellular. The chain crosses the membrane as a helical span at residues 585–605 (FQNQTLTPTIAFTALSLFAIL). At 606–953 (RTPMDQIAST…KFSAYKWLAD (348 aa)) the chain is on the cytoplasmic side. One can recognise an ABC transporter domain in the interval 651–892 (FGFEDASMEW…NEFLRESINN (242 aa)). 686-693 (GPTGSGKS) serves as a coordination point for ATP. Polar residues predominate over residues 892–901 (NDSKNTTHNQ). The disordered stretch occupies residues 892–926 (NDSKNTTHNQIDLKRSTTSKKTKNGDPEGGNSQDE). Residues 954 to 974 (YFGGLGVVFVFTSSSILIHGI) traverse the membrane as a helical segment. In terms of domain architecture, ABC transmembrane type-1 2 spans 961–1218 (VFVFTSSSIL…SSVMIIMKAS (258 aa)). Topologically, residues 975–1013 (TLSQGFWLRYWLDTGSSGSKSTWLYRIVEGHSNIYFLLT) are extracellular. The helical transmembrane segment at 1014 to 1034 (YIIIGLVSSFLTSGKVWIAII) threads the bilayer. Residues 1035–1082 (SGTNVTKKIFAKLLSSILYAKLRFHNVTPTGRIMNRFSKDMDIIDQQL) lie on the Cytoplasmic side of the membrane. The helical transmembrane segment at 1083–1105 (IPNFEGLSYSVVVCLWIILLIGY) threads the bilayer. The Extracellular portion of the chain corresponds to 1106–1109 (VTPQ). Residues 1110–1132 (FLLFAIPLCALYYTVCTLYLRAS) form a helical membrane-spanning segment. Over 1133–1197 (RELKRIDNIN…NMATEWITYR (65 aa)) the chain is Cytoplasmic. A helical transmembrane segment spans residues 1198–1218 (VDIIGTLVLFSSSVMIIMKAS).

This sequence belongs to the ABC transporter superfamily. ABCC family. Conjugate transporter (TC 3.A.1.208) subfamily.

The protein resides in the membrane. This chain is ABC transporter NFT1 (NFT1), found in Saccharomyces cerevisiae (strain ATCC 204508 / S288c) (Baker's yeast).